Reading from the N-terminus, the 158-residue chain is C-type lectin mannose-binding isoform (158 aa).

The N-terminal stretch at 1–20 is a signal peptide; it reads MGRFLLVTLSMLVVTFSLNE. 3 disulfide bridges follow: cysteine 26/cysteine 37, cysteine 54/cysteine 154, and cysteine 129/cysteine 146. Residues 33–155 form the C-type lectin domain; it reads KNGFCYKVFN…CEALYHFICQ (123 aa). The Mannose-binding motif lies at 119-121; sequence EPN. An N-linked (GlcNAc...) asparagine glycan is attached at asparagine 121. Ca(2+)-binding residues include glutamate 127, asparagine 142, and aspartate 143.

This sequence belongs to the true venom lectin family. Homodimer; disulfide-linked. As to expression, expressed by the venom gland.

It localises to the secreted. Functionally, mannose-binding lectin that binds to and agglutinates erythrocytes in a calcium-dependent manner. This Notechis scutatus scutatus (Mainland tiger snake) protein is C-type lectin mannose-binding isoform.